We begin with the raw amino-acid sequence, 128 residues long: Ribonuclease P protein component (128 aa).

This sequence belongs to the RnpA family. Consists of a catalytic RNA component (M1 or rnpB) and a protein subunit.

It catalyses the reaction Endonucleolytic cleavage of RNA, removing 5'-extranucleotides from tRNA precursor.. Its function is as follows. RNaseP catalyzes the removal of the 5'-leader sequence from pre-tRNA to produce the mature 5'-terminus. It can also cleave other RNA substrates such as 4.5S RNA. The protein component plays an auxiliary but essential role in vivo by binding to the 5'-leader sequence and broadening the substrate specificity of the ribozyme. This Prochlorococcus marinus (strain AS9601) protein is Ribonuclease P protein component.